Reading from the N-terminus, the 1122-residue chain is Transcription-repair-coupling factor (1122 aa).

The region spanning 593–758 is the Helicase ATP-binding domain; the sequence is DLRNGMLMDR…MTGLKELSII (166 aa). ATP is bound at residue 606-613; sequence GDVGFGKT. A DEEQ box motif is present at residues 711–714; the sequence is DEEQ. The region spanning 779 to 933 is the Helicase C-terminal domain; sequence IIRDALLREH…GFTIASRDMD (155 aa).

In the N-terminal section; belongs to the UvrB family. It in the C-terminal section; belongs to the helicase family. RecG subfamily.

The protein localises to the cytoplasm. Couples transcription and DNA repair by recognizing RNA polymerase (RNAP) stalled at DNA lesions. Mediates ATP-dependent release of RNAP and its truncated transcript from the DNA, and recruitment of nucleotide excision repair machinery to the damaged site. This chain is Transcription-repair-coupling factor, found in Rickettsia conorii (strain ATCC VR-613 / Malish 7).